Consider the following 646-residue polypeptide: Sulfate transporter 3.2 (646 aa).

Residues 1–76 are Cytoplasmic-facing; that stretch reads MSSKRASQYH…GYSLEYLKSD (76 aa). The helical transmembrane segment at 77-97 threads the bilayer; it reads VISGITIASLAIPQGISYAQL. The Extracellular portion of the chain corresponds to 98-99; it reads AN. A helical transmembrane segment spans residues 100–120; sequence LPPILGLYSSLVPPLVYAIMG. Residues 121-124 are Cytoplasmic-facing; it reads SSRD. A helical membrane pass occupies residues 125–145; the sequence is LAVGTVAVASLLTAAMLGKEV. Over 146-154 the chain is Extracellular; that stretch reads NAVVNPKLY. The helical transmembrane segment at 155–175 threads the bilayer; it reads LHLAFTATFFAGLMQTCLGLL. A topological domain (cytoplasmic) is located at residue Arg-176. Residues 177-197 traverse the membrane as a helical segment; that stretch reads LGFVVEILSHAAIVGFMGGAA. The Extracellular segment spans residues 198-235; the sequence is TVVCLQQLKGLLGLHHFTHSTDIVTVLRSIFSQSHMWR. The helical transmembrane segment at 236 to 256 threads the bilayer; it reads WESGVLGCCFLIFLLTTKYIS. The Cytoplasmic segment spans residues 257–262; that stretch reads KKRPKL. The chain crosses the membrane as a helical span at residues 263–283; that stretch reads FWISAMSPLVSVIFGTIFLYF. Topologically, residues 284-315 are extracellular; the sequence is LHDQFHGIQFIGELKKGINPPSITHLVFTPPY. Residues 316-336 traverse the membrane as a helical segment; sequence VMLALKVGIITGVIALAEGIA. The Cytoplasmic segment spans residues 337–354; sequence VGRSFAMYKNYNIDGNKE. The helical transmembrane segment at 355–375 threads the bilayer; sequence MIAFGMMNILGSFSSCYLTTG. Over 376–390 the chain is Extracellular; the sequence is PFSRSAVNYNAGCKT. Helical transmembrane passes span 391–411 and 412–432; these read ALSN…LTPL and FFYT…LGLV. The Extracellular segment spans residues 433–447; it reads DYEAAIHLWKLDKFD. Residues 448-468 form a helical membrane-spanning segment; it reads FFVCLSAYLGVVFGTIEIGLI. Topologically, residues 469–646 are cytoplasmic; the sequence is LSVGISVMRL…DSPVPEFNNV (178 aa). Positions 504 to 627 constitute an STAS domain; that stretch reads HYPQAITRSS…LTVAEAVAAC (124 aa).

This sequence belongs to the SLC26A/SulP transporter (TC 2.A.53) family. Expressed only in leaves.

It is found in the membrane. In terms of biological role, h(+)/sulfate cotransporter that may play a role in the regulation of sulfate assimilation. The chain is Sulfate transporter 3.2 (SULTR3;2) from Arabidopsis thaliana (Mouse-ear cress).